The following is a 416-amino-acid chain: Probable glucan 1,3-beta-glucosidase A (416 aa).

The first 22 residues, 1-22, serve as a signal peptide directing secretion; sequence MIFKFSQKALVALYLVVGLAEA. Residue E211 is the Proton donor of the active site. Cystine bridges form between C291/C415 and C316/C342. Catalysis depends on E308, which acts as the Nucleophile. The N-linked (GlcNAc...) asparagine glycan is linked to N344.

The protein belongs to the glycosyl hydrolase 5 (cellulase A) family. In terms of assembly, monomer. Requires Mn(2+) as cofactor.

The protein localises to the secreted. It catalyses the reaction Successive hydrolysis of beta-D-glucose units from the non-reducing ends of (1-&gt;3)-beta-D-glucans, releasing alpha-glucose.. Its function is as follows. Beta-glucanases participate in the metabolism of beta-glucan, the main structural component of the cell wall. It could also function biosynthetically as a transglycosylase. This is Probable glucan 1,3-beta-glucosidase A (exgA) from Aspergillus fumigatus (strain ATCC MYA-4609 / CBS 101355 / FGSC A1100 / Af293) (Neosartorya fumigata).